Consider the following 335-residue polypeptide: Aliphatic sulfonates import ATP-binding protein SsuB (335 aa).

The ABC transporter domain maps to 74 to 293; the sequence is VRLTRVSKRY…ARASAAFAAL (220 aa). ATP is bound at residue 106–113; it reads GRSGCGKS. Residues 308 to 335 are disordered; the sequence is APAAPNAAGPEGASRGRAAPASGLRWAV.

The protein belongs to the ABC transporter superfamily. Aliphatic sulfonates importer (TC 3.A.1.17.2) family. The complex is composed of two ATP-binding proteins (SsuB), two transmembrane proteins (SsuC) and a solute-binding protein (SsuA).

Its subcellular location is the cell inner membrane. It carries out the reaction ATP + H2O + aliphatic sulfonate-[sulfonate-binding protein]Side 1 = ADP + phosphate + aliphatic sulfonateSide 2 + [sulfonate-binding protein]Side 1.. Its function is as follows. Part of the ABC transporter complex SsuABC involved in aliphatic sulfonates import. Responsible for energy coupling to the transport system. In Burkholderia mallei (strain ATCC 23344), this protein is Aliphatic sulfonates import ATP-binding protein SsuB.